Here is a 91-residue protein sequence, read N- to C-terminus: MSRSIKKGPFVDAHLTKKVEAAVAGKDKKPIKTWSRRSTILPEFIGLTIAVHNGRQHVPVYINENMVGHKLGEFALTRTFKGHAADKKAKR.

This sequence belongs to the universal ribosomal protein uS19 family.

Functionally, protein S19 forms a complex with S13 that binds strongly to the 16S ribosomal RNA. The sequence is that of Small ribosomal subunit protein uS19 from Bordetella avium (strain 197N).